A 102-amino-acid chain; its full sequence is Integration host factor subunit alpha (102 aa).

This sequence belongs to the bacterial histone-like protein family. As to quaternary structure, heterodimer of an alpha and a beta chain.

This protein is one of the two subunits of integration host factor, a specific DNA-binding protein that functions in genetic recombination as well as in transcriptional and translational control. This Chromohalobacter salexigens (strain ATCC BAA-138 / DSM 3043 / CIP 106854 / NCIMB 13768 / 1H11) protein is Integration host factor subunit alpha.